The following is a 1171-amino-acid chain: ATP-dependent helicase/deoxyribonuclease subunit B (1171 aa).

The 390-residue stretch at 1 to 390 folds into the UvrD-like helicase ATP-binding domain; the sequence is MSLRFVIGRA…HPLVECIRSA (390 aa). 8–15 is an ATP binding site; it reads GRAGSGKS. A UvrD-like helicase C-terminal domain is found at 281–587; the sequence is MEQPRFHSPA…QFANIPPSLD (307 aa). Residues cysteine 805, cysteine 1129, cysteine 1132, and cysteine 1138 each contribute to the [4Fe-4S] cluster site.

This sequence belongs to the helicase family. AddB/RexB type 1 subfamily. Heterodimer of AddA and AddB. The cofactor is Mg(2+). It depends on [4Fe-4S] cluster as a cofactor.

In terms of biological role, the heterodimer acts as both an ATP-dependent DNA helicase and an ATP-dependent, dual-direction single-stranded exonuclease. Recognizes the chi site generating a DNA molecule suitable for the initiation of homologous recombination. The AddB subunit has 5' -&gt; 3' nuclease activity but not helicase activity. This is ATP-dependent helicase/deoxyribonuclease subunit B from Bacillus cereus (strain ATCC 14579 / DSM 31 / CCUG 7414 / JCM 2152 / NBRC 15305 / NCIMB 9373 / NCTC 2599 / NRRL B-3711).